We begin with the raw amino-acid sequence, 422 residues long: Tyrosine--tRNA ligase (422 aa).

Y36 provides a ligand contact to L-tyrosine. The 'HIGH' region motif lies at 41 to 50; it reads PTAGSLHIGH. Y174 and Q178 together coordinate L-tyrosine. Residues 234 to 238 carry the 'KMSKS' region motif; it reads KFGKT. K237 is an ATP binding site. The 65-residue stretch at 356–420 folds into the S4 RNA-binding domain; that stretch reads TDLVTLLVES…GKKQYRLVTW (65 aa).

Belongs to the class-I aminoacyl-tRNA synthetase family. TyrS type 1 subfamily. In terms of assembly, homodimer.

Its subcellular location is the cytoplasm. It carries out the reaction tRNA(Tyr) + L-tyrosine + ATP = L-tyrosyl-tRNA(Tyr) + AMP + diphosphate + H(+). Its function is as follows. Catalyzes the attachment of tyrosine to tRNA(Tyr) in a two-step reaction: tyrosine is first activated by ATP to form Tyr-AMP and then transferred to the acceptor end of tRNA(Tyr). The sequence is that of Tyrosine--tRNA ligase from Aeromonas hydrophila subsp. hydrophila (strain ATCC 7966 / DSM 30187 / BCRC 13018 / CCUG 14551 / JCM 1027 / KCTC 2358 / NCIMB 9240 / NCTC 8049).